The following is a 414-amino-acid chain: UDP-N-acetylglucosamine 1-carboxyvinyltransferase (414 aa).

A phosphoenolpyruvate-binding site is contributed by 19 to 20 (KN). A UDP-N-acetyl-alpha-D-glucosamine-binding site is contributed by R89. The active-site Proton donor is the C113. C113 carries the post-translational modification 2-(S-cysteinyl)pyruvic acid O-phosphothioketal. Residues 118–122 (RPIDL), D301, and V323 contribute to the UDP-N-acetyl-alpha-D-glucosamine site.

This sequence belongs to the EPSP synthase family. MurA subfamily.

It localises to the cytoplasm. The enzyme catalyses phosphoenolpyruvate + UDP-N-acetyl-alpha-D-glucosamine = UDP-N-acetyl-3-O-(1-carboxyvinyl)-alpha-D-glucosamine + phosphate. It participates in cell wall biogenesis; peptidoglycan biosynthesis. Its function is as follows. Cell wall formation. Adds enolpyruvyl to UDP-N-acetylglucosamine. This Bdellovibrio bacteriovorus (strain ATCC 15356 / DSM 50701 / NCIMB 9529 / HD100) protein is UDP-N-acetylglucosamine 1-carboxyvinyltransferase.